A 286-amino-acid chain; its full sequence is 33 kDa chaperonin (286 aa).

2 disulfide bridges follow: C225–C227 and C258–C261.

This sequence belongs to the HSP33 family. Under oxidizing conditions two disulfide bonds are formed involving the reactive cysteines. Under reducing conditions zinc is bound to the reactive cysteines and the protein is inactive.

The protein localises to the cytoplasm. Its function is as follows. Redox regulated molecular chaperone. Protects both thermally unfolding and oxidatively damaged proteins from irreversible aggregation. Plays an important role in the bacterial defense system toward oxidative stress. In Shewanella baltica (strain OS223), this protein is 33 kDa chaperonin.